Consider the following 125-residue polypeptide: Kappa-casein (125 aa).

A disordered region spans residues 42 to 63; the sequence is LPNIDPPTVERRPRPRPSFIAI. O-linked (GalNAc...) threonine glycosylation is present at Thr97. Position 104 is a phosphoserine; alternate (Ser104). A glycan (O-linked (GalNAc...) serine; alternate) is linked at Ser104. The O-linked (GalNAc...) threonine glycan is linked to Thr121. Ser122 bears the Phosphoserine mark.

This sequence belongs to the kappa-casein family. In terms of tissue distribution, mammary gland specific. Secreted in milk.

It localises to the secreted. Kappa-casein stabilizes micelle formation, preventing casein precipitation in milk. The polypeptide is Kappa-casein (CSN3) (Lama guanicoe (Guanaco)).